The chain runs to 1132 residues: Major DNA-binding protein (1132 aa).

Residues 1103–1132 (VEELFPSPGVPSLTVGKKRKIASLLSDLDL) are required for nuclear localization.

The protein belongs to the herpesviridae major DNA-binding protein family. Homooligomers. Forms double-helical filaments necessary for the formation of replication compartments within the host nucleus. Interacts with the origin-binding protein. Interacts with the helicase primase complex; this interaction stimulates primer synthesis activity of the helicase-primase complex. Interacts with the DNA polymerase. Interacts with the alkaline exonuclease; this interaction increases its nuclease processivity.

The protein localises to the host nucleus. In terms of biological role, plays several crucial roles in viral infection. Participates in the opening of the viral DNA origin to initiate replication by interacting with the origin-binding protein. May disrupt loops, hairpins and other secondary structures present on ssDNA to reduce and eliminate pausing of viral DNA polymerase at specific sites during elongation. Promotes viral DNA recombination by performing strand-transfer, characterized by the ability to transfer a DNA strand from a linear duplex to a complementary single-stranded DNA circle. Can also catalyze the renaturation of complementary single strands. Additionally, reorganizes the host cell nucleus, leading to the formation of prereplicative sites and replication compartments. This process is driven by the protein which can form double-helical filaments in the absence of DNA. This is Major DNA-binding protein from Human herpesvirus 8 type P (isolate GK18) (HHV-8).